The sequence spans 333 residues: Probable tRNA pseudouridine synthase B (333 aa).

The segment covering 1-14 has biased composition (basic and acidic residues); the sequence is MKCPSREVFSKFEE. The segment at 1 to 27 is disordered; sequence MKCPSREVFSKFEESTNPQWGKPPSQR. The Nucleophile role is filled by Asp71. The 76-residue stretch at 238–313 folds into the PUA domain; sequence LPKIWVRDSA…LVARTDRVVM (76 aa).

Belongs to the pseudouridine synthase TruB family. Type 2 subfamily.

It carries out the reaction uridine(55) in tRNA = pseudouridine(55) in tRNA. Could be responsible for synthesis of pseudouridine from uracil-55 in the psi GC loop of transfer RNAs. This Pyrobaculum aerophilum (strain ATCC 51768 / DSM 7523 / JCM 9630 / CIP 104966 / NBRC 100827 / IM2) protein is Probable tRNA pseudouridine synthase B.